A 197-amino-acid chain; its full sequence is Large ribosomal subunit protein bL25 (197 aa).

This sequence belongs to the bacterial ribosomal protein bL25 family. CTC subfamily. In terms of assembly, part of the 50S ribosomal subunit; part of the 5S rRNA/L5/L18/L25 subcomplex. Contacts the 5S rRNA. Binds to the 5S rRNA independently of L5 and L18.

This is one of the proteins that binds to the 5S RNA in the ribosome where it forms part of the central protuberance. In Citrifermentans bemidjiense (strain ATCC BAA-1014 / DSM 16622 / JCM 12645 / Bem) (Geobacter bemidjiensis), this protein is Large ribosomal subunit protein bL25.